The primary structure comprises 591 residues: Speriolin (591 aa).

Positions 1–42 form a coiled coil; the sequence is MSLLTNYEGLRHQIERLVRENEELKKLVRLIRENHELKSAIK. The segment at 1 to 78 is necessary for targeting centrosomes; it reads MSLLTNYEGL…NNGVFLPPSP (78 aa). A compositionally biased stretch (polar residues) spans 302–314; the sequence is NTSDTQAQPSAAQ. 2 disordered regions span residues 302–331 and 346–435; these read NTSDTQAQPSAAQEQVVPASVPTSPTTSPT and ATSY…ENPR. Residues 317–331 are compositionally biased toward low complexity; that stretch reads VVPASVPTSPTTSPT. 2 stretches are compositionally biased toward polar residues: residues 346–357 and 390–401; these read ATSYTPSSTTHI and PRTSSSPASVND.

Belongs to the speriolin family. As to quaternary structure, found in a complex with CDC20, CDC27 and TUBG1. Interacts with CDC20. In terms of tissue distribution, detected only in testis.

It is found in the cytoplasm. The protein localises to the cytoskeleton. The protein resides in the microtubule organizing center. Its subcellular location is the centrosome. The sequence is that of Speriolin (SPATC1) from Homo sapiens (Human).